Reading from the N-terminus, the 390-residue chain is tRNA(Met) cytidine acetate ligase (390 aa).

ATP is bound by residues 7–20 (VVEYNPFHNGHKLH), glycine 101, asparagine 162, and arginine 187.

Belongs to the TmcAL family.

It is found in the cytoplasm. The enzyme catalyses cytidine(34) in elongator tRNA(Met) + acetate + ATP = N(4)-acetylcytidine(34) in elongator tRNA(Met) + AMP + diphosphate. In terms of biological role, catalyzes the formation of N(4)-acetylcytidine (ac(4)C) at the wobble position of elongator tRNA(Met), using acetate and ATP as substrates. First activates an acetate ion to form acetyladenylate (Ac-AMP) and then transfers the acetyl group to tRNA to form ac(4)C34. The protein is tRNA(Met) cytidine acetate ligase of Listeria monocytogenes serotype 4a (strain HCC23).